The following is a 288-amino-acid chain: Quinate/shikimate dehydrogenase (288 aa).

Substrate is bound by residues Lys71 and Asp107. NAD(+)-binding positions include 132–135, 155–158, Lys205, 232–235, and Gly255; these read AGGA, NRRD, and CVYN.

It belongs to the shikimate dehydrogenase family. As to quaternary structure, homodimer.

It carries out the reaction L-quinate + NAD(+) = 3-dehydroquinate + NADH + H(+). It catalyses the reaction L-quinate + NADP(+) = 3-dehydroquinate + NADPH + H(+). The enzyme catalyses shikimate + NADP(+) = 3-dehydroshikimate + NADPH + H(+). The catalysed reaction is shikimate + NAD(+) = 3-dehydroshikimate + NADH + H(+). Its pathway is metabolic intermediate biosynthesis; chorismate biosynthesis; chorismate from D-erythrose 4-phosphate and phosphoenolpyruvate: step 4/7. The actual biological function of YdiB remains unclear, nor is it known whether 3-dehydroshikimate or quinate represents the natural substrate. Catalyzes the reversible NAD-dependent reduction of both 3-dehydroshikimate (DHSA) and 3-dehydroquinate to yield shikimate (SA) and quinate, respectively. It can use both NAD or NADP for catalysis, however it has higher catalytic efficiency with NAD. The sequence is that of Quinate/shikimate dehydrogenase from Escherichia coli (strain 55989 / EAEC).